The chain runs to 214 residues: MNNLKRLTKTIFSCFTLSALLLLAGCETLPPMTDLSPITVIDARQATAWELQGKLAIKTPDDKLSANIYWRHSEDRDELTLTTMLGTTVLTLNSTPNSAHLHIDGKDFRDDNAQRLLERVSGWSIPLADLPLWITGQVGPNDQVIESDSQGKPKQLTNTQTPPPWQVAFLSWQSQSGASVPHQLKLERGDLQLKLQLNQWQALGKPAILVGEQP.

The first 25 residues, 1–25 (MNNLKRLTKTIFSCFTLSALLLLAG), serve as a signal peptide directing secretion. Cys26 carries the N-palmitoyl cysteine lipid modification. Cys26 carries S-diacylglycerol cysteine lipidation. The span at 143–160 (QVIESDSQGKPKQLTNTQ) shows a compositional bias: polar residues. Residues 143–163 (QVIESDSQGKPKQLTNTQTPP) form a disordered region.

This sequence belongs to the LolB family. As to quaternary structure, monomer.

Its subcellular location is the cell outer membrane. Its function is as follows. Plays a critical role in the incorporation of lipoproteins in the outer membrane after they are released by the LolA protein. The protein is Outer-membrane lipoprotein LolB of Shewanella baltica (strain OS223).